A 529-amino-acid chain; its full sequence is Inosine-5'-monophosphate dehydrogenase (529 aa).

CBS domains follow at residues 129–185 (MVTD…SKQV) and 189–246 (MTKA…PLAT). Residues Asp283 and 334–336 (GVG) each bind NAD(+). K(+) contacts are provided by Gly336 and Gly338. Ser339 lines the IMP pocket. A K(+)-binding site is contributed by Cys341. Cys341 acts as the Thioimidate intermediate in catalysis. Residues 374-376 (DGG), 397-398 (GS), and 421-425 (YRGMG) contribute to the IMP site. Arg443 (proton acceptor) is an active-site residue. Residue Glu458 participates in IMP binding. Residues Glu511, Ser512, and His513 each coordinate K(+).

It belongs to the IMPDH/GMPR family. As to quaternary structure, homotetramer. K(+) serves as cofactor.

It catalyses the reaction IMP + NAD(+) + H2O = XMP + NADH + H(+). It participates in purine metabolism; XMP biosynthesis via de novo pathway; XMP from IMP: step 1/1. Mycophenolic acid (MPA) is a non-competitive inhibitor that prevents formation of the closed enzyme conformation by binding to the same site as the amobile flap. In contrast, mizoribine monophosphate (MZP) is a competitive inhibitor that induces the closed conformation. MPA is a potent inhibitor of mammalian IMPDHs but a poor inhibitor of the bacterial enzymes. MZP is a more potent inhibitor of bacterial IMPDH. Its function is as follows. Catalyzes the conversion of inosine 5'-phosphate (IMP) to xanthosine 5'-phosphate (XMP), the first committed and rate-limiting step in the de novo synthesis of guanine nucleotides, and therefore plays an important role in the regulation of cell growth. This Mycobacterium bovis (strain ATCC BAA-935 / AF2122/97) protein is Inosine-5'-monophosphate dehydrogenase.